The chain runs to 215 residues: Ribose-5-phosphate isomerase A (215 aa).

Residues 26–29 (TGST), 79–82 (DGAD), and 92–95 (KGGG) contribute to the substrate site. E101 (proton acceptor) is an active-site residue. Residue K119 participates in substrate binding.

Belongs to the ribose 5-phosphate isomerase family. In terms of assembly, homodimer.

The catalysed reaction is aldehydo-D-ribose 5-phosphate = D-ribulose 5-phosphate. The protein operates within carbohydrate degradation; pentose phosphate pathway; D-ribose 5-phosphate from D-ribulose 5-phosphate (non-oxidative stage): step 1/1. Catalyzes the reversible conversion of ribose-5-phosphate to ribulose 5-phosphate. The polypeptide is Ribose-5-phosphate isomerase A (Xylella fastidiosa (strain M12)).